Consider the following 428-residue polypeptide: Enolase (428 aa).

Residue Gln163 coordinates (2R)-2-phosphoglycerate. Glu205 (proton donor) is an active-site residue. Mg(2+) is bound by residues Asp242, Glu286, and Asp313. The (2R)-2-phosphoglycerate site is built by Lys338, Arg367, Ser368, and Lys389. The active-site Proton acceptor is the Lys338.

It belongs to the enolase family. It depends on Mg(2+) as a cofactor.

Its subcellular location is the cytoplasm. The protein localises to the secreted. It is found in the cell surface. It catalyses the reaction (2R)-2-phosphoglycerate = phosphoenolpyruvate + H2O. It functions in the pathway carbohydrate degradation; glycolysis; pyruvate from D-glyceraldehyde 3-phosphate: step 4/5. Functionally, catalyzes the reversible conversion of 2-phosphoglycerate (2-PG) into phosphoenolpyruvate (PEP). It is essential for the degradation of carbohydrates via glycolysis. The polypeptide is Enolase (Lactobacillus acidophilus (strain ATCC 700396 / NCK56 / N2 / NCFM)).